The primary structure comprises 361 residues: Ribosomal RNA large subunit methyltransferase M (361 aa).

S-adenosyl-L-methionine is bound by residues Ser187, 220 to 223 (CPGG), Asp239, Asp259, and Asp276. Lys305 functions as the Proton acceptor in the catalytic mechanism.

It belongs to the class I-like SAM-binding methyltransferase superfamily. RNA methyltransferase RlmE family. RlmM subfamily. In terms of assembly, monomer.

Its subcellular location is the cytoplasm. It catalyses the reaction cytidine(2498) in 23S rRNA + S-adenosyl-L-methionine = 2'-O-methylcytidine(2498) in 23S rRNA + S-adenosyl-L-homocysteine + H(+). In terms of biological role, catalyzes the 2'-O-methylation at nucleotide C2498 in 23S rRNA. This is Ribosomal RNA large subunit methyltransferase M from Shewanella oneidensis (strain ATCC 700550 / JCM 31522 / CIP 106686 / LMG 19005 / NCIMB 14063 / MR-1).